The sequence spans 74 residues: ATP synthase subunit c (74 aa).

Transmembrane regions (helical) follow at residues 13-33 and 51-71; these read ISVIALAGVGLGIGNIFASLI and ILGFALTEAVALFALLIAFLI.

The protein belongs to the ATPase C chain family. In terms of assembly, F-type ATPases have 2 components, F(1) - the catalytic core - and F(0) - the membrane proton channel. F(1) has five subunits: alpha(3), beta(3), gamma(1), delta(1), epsilon(1). F(0) has three main subunits: a(1), b(2) and c(10-14). The alpha and beta chains form an alternating ring which encloses part of the gamma chain. F(1) is attached to F(0) by a central stalk formed by the gamma and epsilon chains, while a peripheral stalk is formed by the delta and b chains.

It is found in the cell inner membrane. Functionally, f(1)F(0) ATP synthase produces ATP from ADP in the presence of a proton or sodium gradient. F-type ATPases consist of two structural domains, F(1) containing the extramembraneous catalytic core and F(0) containing the membrane proton channel, linked together by a central stalk and a peripheral stalk. During catalysis, ATP synthesis in the catalytic domain of F(1) is coupled via a rotary mechanism of the central stalk subunits to proton translocation. In terms of biological role, key component of the F(0) channel; it plays a direct role in translocation across the membrane. A homomeric c-ring of between 10-14 subunits forms the central stalk rotor element with the F(1) delta and epsilon subunits. The polypeptide is ATP synthase subunit c (Granulibacter bethesdensis (strain ATCC BAA-1260 / CGDNIH1)).